The chain runs to 514 residues: Antiseptic resistance protein (514 aa).

At 1–23 (MISFFTKTTDMMTSKKRWTALVV) the chain is on the cytoplasmic side. The chain crosses the membrane as a helical span at residues 24–41 (LAVSLFVVTMDMTILIMA). Topologically, residues 42-57 (LPELVRELEPSGTQQL) are extracellular. Residues 58–75 (WIVDIYSLVLAGFIIPLS) traverse the membrane as a helical segment. Residues 76-86 (AFADKWGRKKA) lie on the Cytoplasmic side of the membrane. The chain crosses the membrane as a helical span at residues 87–104 (LLTGFALFGLVSLAIFFA). Residues 105-112 (ESAEFVIA) are Extracellular-facing. Residues 113–130 (IRFLLGIAGALIMPTTLS) form a helical membrane-spanning segment. At 131-146 (MIRVIFENPKERATAL) the chain is on the cytoplasmic side. A helical transmembrane segment spans residues 147–164 (AVWSIASSIGAVFGPIIG). Topologically, residues 165–172 (GALLEQFS) are extracellular. The helical transmembrane segment at 173–190 (WHSAFLINVPFAIIAVVA) threads the bilayer. Residues 191–207 (GLFLLPESKLSKEKSHS) lie on the Cytoplasmic side of the membrane. The helical transmembrane segment at 208–225 (WDIPSTILSIAGMIGLVW) threads the bilayer. Residues 226–237 (SIKEFSKEGLAD) lie on the Extracellular side of the membrane. The helical transmembrane segment at 238 to 255 (IIPWVVIVLAITMIVIFV) threads the bilayer. At 256-278 (KRNLSSSDPMLDVRLFKKRSFSA) the chain is on the cytoplasmic side. A helical transmembrane segment spans residues 279–295 (GTIAAFMTMFAMASVLL). Residues 296 to 315 (LASQWLQVVEELSPFKAGLY) lie on the Extracellular side of the membrane. The helical transmembrane segment at 316–333 (LLPMAIGDMVFAPIAPGL) threads the bilayer. Over 334–341 (AARFGPKI) the chain is Cytoplasmic. Residues 342–360 (VLPSGIGIAAIGMFIMYFF) traverse the membrane as a helical segment. The Extracellular segment spans residues 361-369 (GHPLSYSTM). A helical transmembrane segment spans residues 370–387 (ALALILVGAGMASLAVAS). The Cytoplasmic segment spans residues 388–408 (ALIMLETPTSKAGNAAAVEES). The chain crosses the membrane as a helical span at residues 409–426 (MYDLGNVFGVAVLGSLSS). At 427–481 (MLYRVFLDISSFSSKGIVGDLAHVAEESVVGAVEVAKATGIKQLANEAVTSFNDA) the chain is on the extracellular side. A helical membrane pass occupies residues 482–499 (FVATALVGGIIMIIISIV). Residues 500–514 (VYLLIPKSLDITKQK) lie on the Cytoplasmic side of the membrane.

This sequence belongs to the major facilitator superfamily.

It localises to the cell membrane. Functionally, confers export-mediated resistance against antiseptic and disinfectant compounds such as intercalating dyes, quaternary ammonium salts and diamidines. This Staphylococcus aureus (strain Mu50 / ATCC 700699) protein is Antiseptic resistance protein (qacA).